A 422-amino-acid polypeptide reads, in one-letter code: Serine--tRNA ligase (422 aa).

229 to 231 (TAE) lines the L-serine pocket. Position 260–262 (260–262 (RAE)) interacts with ATP. Glu283 contributes to the L-serine binding site. An ATP-binding site is contributed by 347-350 (EISS). Ser383 provides a ligand contact to L-serine.

It belongs to the class-II aminoacyl-tRNA synthetase family. Type-1 seryl-tRNA synthetase subfamily. In terms of assembly, homodimer. The tRNA molecule binds across the dimer.

Its subcellular location is the cytoplasm. The enzyme catalyses tRNA(Ser) + L-serine + ATP = L-seryl-tRNA(Ser) + AMP + diphosphate + H(+). It carries out the reaction tRNA(Sec) + L-serine + ATP = L-seryl-tRNA(Sec) + AMP + diphosphate + H(+). The protein operates within aminoacyl-tRNA biosynthesis; selenocysteinyl-tRNA(Sec) biosynthesis; L-seryl-tRNA(Sec) from L-serine and tRNA(Sec): step 1/1. Its function is as follows. Catalyzes the attachment of serine to tRNA(Ser). Is also able to aminoacylate tRNA(Sec) with serine, to form the misacylated tRNA L-seryl-tRNA(Sec), which will be further converted into selenocysteinyl-tRNA(Sec). The sequence is that of Serine--tRNA ligase from Halothermothrix orenii (strain H 168 / OCM 544 / DSM 9562).